The sequence spans 321 residues: MKKRCLITGGAGFIGSHLAEELVKRGHPVTIVDNFYKGKSKYHEELTGNIPIIPISILDKNSMHELVNQHDVVFHLAAILGVKTTMEKSIELIETNFDGTRNILQAALKGKKKVIFASTSEVYGKGTPPFSEDDDRLYGATSKIRWSYAICKTLEETLCLGYALQGLPVTIVRYFNIYGPRAKDGPYAGVIPRFIRAALQGDDLLVYGDGKQTRCFTYVSDAVEATIAAMDEKVNGEIINIGSEDEKSIQEVAQDIHQLTHSSSKIVHVPFEKVYPHGFEEIPNRKPDVTKLKEMCQFHPNVSWEQGLKETIQWFREIEND.

The NAD(+) site is built by Gly12, Phe13, Ile14, Asp33, Asn34, Tyr36, Gly38, Leu76, Thr95, Ala117, Tyr148, and Lys152. The active-site Proton acceptor is Tyr148.

This sequence belongs to the NAD(P)-dependent epimerase/dehydratase family. Homodimer. It depends on NAD(+) as a cofactor.

It carries out the reaction UDP-2-acetamido-2-deoxy-alpha-D-glucuronate + H(+) = UDP-N-acetyl-alpha-D-xylosamine + CO2. Activity is completely inhibited by NADH but not by NADPH. Functionally, decarboxylase involved in the biosynthesis of the nucleotide-sugar UDP-N-acetylxylosamine (UDP-XylNAc). Catalyzes the NAD-dependent decarboxylation of UDP-N-acetylglucosaminuronic acid (UDP-GlcNAcA) to UDP-XylNAc. Cannot use other UDP-uronates, such as UDP-glucuronic acid (UDP-GlcA) and UDP-galacturonic acid (UDP-GalA). This is UDP-N-acetyl-alpha-D-glucosaminuronate decarboxylase from Bacillus cytotoxicus (strain DSM 22905 / CIP 110041 / 391-98 / NVH 391-98).